Here is a 301-residue protein sequence, read N- to C-terminus: NAD kinase 2 (301 aa).

Asp-77 acts as the Proton acceptor in catalysis. Residues 77 to 78 (DG), Arg-82, 151 to 152 (NE), Arg-162, Asp-181, and 192 to 197 (TAYAFS) contribute to the NAD(+) site.

Belongs to the NAD kinase family. A divalent metal cation is required as a cofactor.

It is found in the cytoplasm. The catalysed reaction is NAD(+) + ATP = ADP + NADP(+) + H(+). In terms of biological role, involved in the regulation of the intracellular balance of NAD and NADP, and is a key enzyme in the biosynthesis of NADP. Catalyzes specifically the phosphorylation on 2'-hydroxyl of the adenosine moiety of NAD to yield NADP. This Streptomyces avermitilis (strain ATCC 31267 / DSM 46492 / JCM 5070 / NBRC 14893 / NCIMB 12804 / NRRL 8165 / MA-4680) protein is NAD kinase 2.